A 462-amino-acid polypeptide reads, in one-letter code: ATP synthase subunit beta (462 aa).

Position 151–158 (151–158 (GGAGVGKT)) interacts with ATP.

The protein belongs to the ATPase alpha/beta chains family. F-type ATPases have 2 components, CF(1) - the catalytic core - and CF(0) - the membrane proton channel. CF(1) has five subunits: alpha(3), beta(3), gamma(1), delta(1), epsilon(1). CF(0) has four main subunits: a(1), b(1), b'(1) and c(9-12).

Its subcellular location is the cell inner membrane. It catalyses the reaction ATP + H2O + 4 H(+)(in) = ADP + phosphate + 5 H(+)(out). Functionally, produces ATP from ADP in the presence of a proton gradient across the membrane. The catalytic sites are hosted primarily by the beta subunits. The chain is ATP synthase subunit beta from Chlorobium phaeobacteroides (strain BS1).